Reading from the N-terminus, the 227-residue chain is MSEKAILSCRDLGKSYEEGPESVVVLSGLQLELHPGERVAIVGTSGSGKSTLLNLLGGLDTPSKGSVWLAGEELSALGEKARGKLRNRALGFVYQFHHLLPEFTALENVCMPLLIGRTPIPEARQRATALLERVGLGHRLEHKPAELSGGERQRVAIARALVNKPGLVMLDEPTGNLDSHTAQGIQDLMLELSTSMRTAFLVVTHDMNLARQMDRVLHLQEGHLVAI.

In terms of domain architecture, ABC transporter spans 7 to 227; sequence LSCRDLGKSY…HLQEGHLVAI (221 aa). Position 43–50 (43–50) interacts with ATP; sequence GTSGSGKS.

This sequence belongs to the ABC transporter superfamily. Lipoprotein translocase (TC 3.A.1.125) family. In terms of assembly, the complex is composed of two ATP-binding proteins (LolD) and two transmembrane proteins (LolC and LolE).

The protein resides in the cell inner membrane. Its function is as follows. Part of the ABC transporter complex LolCDE involved in the translocation of mature outer membrane-directed lipoproteins, from the inner membrane to the periplasmic chaperone, LolA. Responsible for the formation of the LolA-lipoprotein complex in an ATP-dependent manner. The polypeptide is Lipoprotein-releasing system ATP-binding protein LolD (Pseudomonas fluorescens (strain ATCC BAA-477 / NRRL B-23932 / Pf-5)).